The sequence spans 513 residues: Gluconokinase (513 aa).

ATP-binding positions include K16, T261, G300, and 412 to 416 (GFARS).

The protein belongs to the FGGY kinase family.

It carries out the reaction D-gluconate + ATP = 6-phospho-D-gluconate + ADP + H(+). Its pathway is carbohydrate acid metabolism; D-gluconate degradation. With respect to regulation, catabolite repression by gluconate. The polypeptide is Gluconokinase (gntK) (Bacillus subtilis (strain 168)).